Here is a 213-residue protein sequence, read N- to C-terminus: Large ribosomal subunit protein uL23 (213 aa).

Residues 1 to 117 form a large ribosomal subunit protein uL23 region; the sequence is MNHNEIIKYP…KSTSELKLEE (117 aa). A unknown region spans residues 118 to 213; sequence KIAAKIAAKE…TTKKTTTKKV (96 aa).

This sequence belongs to the universal ribosomal protein uL23 family. In terms of assembly, part of the 50S ribosomal subunit. Contacts protein L29, and trigger factor when it is bound to the ribosome.

Its function is as follows. One of the early assembly proteins it binds 23S rRNA. One of the proteins that surrounds the polypeptide exit tunnel on the outside of the ribosome. Forms the main docking site for trigger factor binding to the ribosome. The sequence is that of Large ribosomal subunit protein uL23 from Mycoplasma mobile (strain ATCC 43663 / 163K / NCTC 11711) (Mesomycoplasma mobile).